A 421-amino-acid polypeptide reads, in one-letter code: Tryptophan synthase beta chain (421 aa).

An N6-(pyridoxal phosphate)lysine modification is found at K112.

This sequence belongs to the TrpB family. In terms of assembly, tetramer of two alpha and two beta chains. It depends on pyridoxal 5'-phosphate as a cofactor.

It carries out the reaction (1S,2R)-1-C-(indol-3-yl)glycerol 3-phosphate + L-serine = D-glyceraldehyde 3-phosphate + L-tryptophan + H2O. The protein operates within amino-acid biosynthesis; L-tryptophan biosynthesis; L-tryptophan from chorismate: step 5/5. In terms of biological role, the beta subunit is responsible for the synthesis of L-tryptophan from indole and L-serine. This is Tryptophan synthase beta chain (trpB) from Mycobacterium bovis (strain ATCC BAA-935 / AF2122/97).